We begin with the raw amino-acid sequence, 168 residues long: Heat shock protein beta-9 (168 aa).

Residues 1–12 (MQRVGSSFSTGQ) show a composition bias toward polar residues. Disordered regions lie at residues 1-25 (MQRV…SRCP), 83-104 (TGQR…EQSV), and 129-168 (LWLR…VKNP). The sHSP domain maps to 38–151 (LPVRLLRDEV…EAQTGQSQKP (114 aa)). Positions 86-104 (RQHESNDPSRGRYRMEQSV) are enriched in basic and acidic residues. The segment covering 158–168 (SSLQNESVKNP) has biased composition (polar residues).

It belongs to the small heat shock protein (HSP20) family. In terms of tissue distribution, testis specific.

The protein localises to the cytoplasm. It localises to the nucleus. The polypeptide is Heat shock protein beta-9 (Hspb9) (Mus musculus (Mouse)).